The following is a 128-amino-acid chain: NADPH-dependent 7-cyano-7-deazaguanine reductase (128 aa).

Cys39 serves as the catalytic Thioimide intermediate. The Proton donor role is filled by Asp46. Residues 61–63 (IEL) and 80–81 (HE) contribute to the substrate site.

Belongs to the GTP cyclohydrolase I family. QueF type 1 subfamily.

Its subcellular location is the cytoplasm. It carries out the reaction 7-aminomethyl-7-carbaguanine + 2 NADP(+) = 7-cyano-7-deazaguanine + 2 NADPH + 3 H(+). The protein operates within tRNA modification; tRNA-queuosine biosynthesis. Catalyzes the NADPH-dependent reduction of 7-cyano-7-deazaguanine (preQ0) to 7-aminomethyl-7-deazaguanine (preQ1). This is NADPH-dependent 7-cyano-7-deazaguanine reductase from Magnetococcus marinus (strain ATCC BAA-1437 / JCM 17883 / MC-1).